The primary structure comprises 109 residues: Protein ELF4-LIKE 3 (109 aa).

Residues 88-109 are disordered; sequence SMEASSEGDSSEGRGNRRIRPA.

Belongs to the EARLY FLOWERING 4 family. Homodimer.

Its subcellular location is the nucleus. Component of the central CCA1/LHY-TOC1 feedback loop in the circadian clock that promotes clock accuracy and is required for sustained rhythms in the absence of daily light/dark cycles. The protein is Protein ELF4-LIKE 3 (EFL3) of Arabidopsis thaliana (Mouse-ear cress).